The chain runs to 1180 residues: Phosphatidylinositol 4-kinase (1180 aa).

The PIK helical domain occupies 1-206 (MNKISDTIII…SVYLHSPSTS (206 aa)). 5 disordered regions span residues 15–84 (NEDE…KHKE), 257–327 (ENDH…ENDN), 355–391 (TSPIKDDMENNNNNNNNNNNNNNNNNNNNNINNNNIN), 768–799 (TISNSSDSCTTETTTTSPVATSPTLPINIPHS), and 832–894 (AISP…SPFG). Over residues 38 to 74 (NNNNNNILTNVNNNKNNTITSSGGSDSSSSSSNNNNN) the composition is skewed to low complexity. Residues 75–84 (KIKKSKKHKE) show a composition bias toward basic residues. The segment covering 257–270 (ENDHHIENDPKKDI) has biased composition (basic and acidic residues). Low complexity-rich tracts occupy residues 271–325 (NSNN…SGEN), 364–391 (NNNNNNNNNNNNNNNNNNNNNINNNNIN), 768–793 (TISNSSDSCTTETTTTSPVATSPTLP), and 835–879 (PPSQ…SPTN). The region spanning 895 to 1164 (ESWQEKIERY…LISYSIDHFK (270 aa)) is the PI3K/PI4K catalytic domain. Residues 901-907 (IERYKKI) are G-loop. A catalytic loop region spans residues 1030–1038 (QIKDRHNGN). The tract at residues 1049 to 1073 (HIDFGFILSNSPGNISFESAPFKLT) is activation loop.

Belongs to the PI3/PI4-kinase family. Type III PI4K subfamily.

It catalyses the reaction a 1,2-diacyl-sn-glycero-3-phospho-(1D-myo-inositol) + ATP = a 1,2-diacyl-sn-glycero-3-phospho-(1D-myo-inositol 4-phosphate) + ADP + H(+). Acts on phosphatidylinositol (PtdIns) in the first committed step in the production of the second messenger inositol-1,4,5,-trisphosphate. In Dictyostelium discoideum (Social amoeba), this protein is Phosphatidylinositol 4-kinase (pikD).